Reading from the N-terminus, the 186-residue chain is Transcription factor FapR (186 aa).

It belongs to the FapR family.

Transcriptional factor involved in regulation of membrane lipid biosynthesis by repressing genes involved in fatty acid and phospholipid metabolism. In Staphylococcus epidermidis (strain ATCC 35984 / DSM 28319 / BCRC 17069 / CCUG 31568 / BM 3577 / RP62A), this protein is Transcription factor FapR.